A 105-amino-acid chain; its full sequence is Large ribosomal subunit protein uL24 (105 aa).

Belongs to the universal ribosomal protein uL24 family. Part of the 50S ribosomal subunit.

In terms of biological role, one of two assembly initiator proteins, it binds directly to the 5'-end of the 23S rRNA, where it nucleates assembly of the 50S subunit. Its function is as follows. One of the proteins that surrounds the polypeptide exit tunnel on the outside of the subunit. The protein is Large ribosomal subunit protein uL24 of Staphylococcus epidermidis (strain ATCC 35984 / DSM 28319 / BCRC 17069 / CCUG 31568 / BM 3577 / RP62A).